The following is a 330-amino-acid chain: Diacylglycerol acyltransferase/mycolyltransferase Ag85B (330 aa).

The signal sequence occupies residues 1-40 (MTDLSEKVRAWGRRLVVGAAAAATLPGLIGIAGGAATANA). 82–83 (LR) serves as a coordination point for substrate. Residues 98–108 (FEWYYQSGLSV) are fibronectin-binding. A disulfide bridge connects residues Cys127 and Cys132. Positions 166 and 194 each coordinate substrate. Ser166 acts as the Nucleophile in catalysis. Glu270 is an active-site residue. Substrate contacts are provided by residues 272-275 (FVRS), Lys279, and 302-304 (HSW). The active site involves His302.

This sequence belongs to the mycobacterial A85 antigen family.

It is found in the secreted. It carries out the reaction 2 alpha,alpha'-trehalose 6-mycolate = alpha,alpha'-trehalose 6,6'-bismycolate + alpha,alpha-trehalose. The catalysed reaction is an acyl-CoA + a 1,2-diacyl-sn-glycerol = a triacyl-sn-glycerol + CoA. Its function is as follows. The antigen 85 proteins (FbpA, FbpB, FbpC) are responsible for the high affinity of mycobacteria for fibronectin, a large adhesive glycoprotein, which facilitates the attachment of M.tuberculosis to murine alveolar macrophages (AMs). They also help to maintain the integrity of the cell wall by catalyzing the transfer of mycolic acids to cell wall arabinogalactan and through the synthesis of alpha,alpha-trehalose dimycolate (TDM, cord factor). They catalyze the transfer of a mycoloyl residue from one molecule of alpha,alpha-trehalose monomycolate (TMM) to another TMM, leading to the formation of TDM. The sequence is that of Diacylglycerol acyltransferase/mycolyltransferase Ag85B (fbpB) from Mycobacterium intracellulare (strain ATCC 13950 / DSM 43223 / JCM 6384 / NCTC 13025 / 3600).